A 241-amino-acid polypeptide reads, in one-letter code: Eukaryotic translation initiation factor 3 subunit J (241 aa).

Positions 1–97 (MEEDWEQLSE…EEEDMTPEQK (97 aa)) are disordered. The segment covering 28 to 45 (GEDEEEEVKDSWEDEDEL) has biased composition (acidic residues). A coiled-coil region spans residues 31–119 (EEEEVKDSWE…ESDLKNALDT (89 aa)). Composition is skewed to basic and acidic residues over residues 46-58 (EEKKDEEKVETPK) and 69-87 (IADKEKLKQEEAERRRLEK).

This sequence belongs to the eIF-3 subunit J family. Component of the eukaryotic translation initiation factor 3 (eIF-3) complex.

It localises to the cytoplasm. Functionally, component of the eukaryotic translation initiation factor 3 (eIF-3) complex, which is involved in protein synthesis of a specialized repertoire of mRNAs and, together with other initiation factors, stimulates binding of mRNA and methionyl-tRNAi to the 40S ribosome. The eIF-3 complex specifically targets and initiates translation of a subset of mRNAs involved in cell proliferation. This chain is Eukaryotic translation initiation factor 3 subunit J, found in Aedes aegypti (Yellowfever mosquito).